Here is a 493-residue protein sequence, read N- to C-terminus: Na(+)/H(+) antiporter subunit D (493 aa).

Helical transmembrane passes span 4-23, 30-52, 72-94, 107-126, 130-149, 162-184, 204-226, 233-255, 270-292, 299-321, 325-347, 368-390, 405-427, and 448-470; these read LVIL…ILFA, RVIS…VDVY, LVAD…VCLF, YYFY…AFLT, FNLF…LIVL, YVVI…YSIT, VLNV…FPLY, YFGP…GIYA, FTHT…GAVS, ILSY…YTQL, GAIY…AGAT, WLAW…SGFF, YIIA…KIFI, and LLLP…EPIF.

This sequence belongs to the CPA3 antiporters (TC 2.A.63) subunit D family. In terms of assembly, forms a heterooligomeric complex that consists of seven subunits: MrpA, MrpB, MrpC, MrpD, MrpE, MrpF and MrpG.

The protein resides in the cell membrane. Its function is as follows. Mnh complex is a Na(+)Li(+)/H(+) antiporter involved in Na(+) and/or Li(+) excretion and Na(+) resistance. Na(+)/H(+) antiport consumes a transmembrane electrical potential, and is thus inferred to be electrogenic. Does not transport K(+), Ca(2+) or Mg(2+). Mrp complex is a Na(+)/H(+) antiporter involved in Na(+) excretion and Na(+) resistance. The chain is Na(+)/H(+) antiporter subunit D (mrpD) from Alkalihalophilus pseudofirmus (strain ATCC BAA-2126 / JCM 17055 / OF4) (Bacillus pseudofirmus).